A 268-amino-acid chain; its full sequence is Urease accessory protein UreD (268 aa).

The protein belongs to the UreD family. UreD, UreF and UreG form a complex that acts as a GTP-hydrolysis-dependent molecular chaperone, activating the urease apoprotein by helping to assemble the nickel containing metallocenter of UreC. The UreE protein probably delivers the nickel.

The protein resides in the cytoplasm. Functionally, required for maturation of urease via the functional incorporation of the urease nickel metallocenter. In Lysinibacillus sphaericus (strain C3-41), this protein is Urease accessory protein UreD.